The sequence spans 33 residues: Protein YdgV (33 aa).

In Escherichia coli (strain K12), this protein is Protein YdgV.